A 245-amino-acid chain; its full sequence is Nucleoprotein (245 aa).

Tyr-30, Lys-67, Arg-106, Arg-186, and Ser-196 together coordinate RNA.

It belongs to the phlebovirus nucleocapsid protein family. In terms of assembly, homodimer. Homohexamer; ring-shaped, necessary to form the nucleocapsid. Homopentamers; opened pentamers in solution. Binds to viral genomic RNA. Interacts with glycoprotein Gn; this interaction allows packaging of nucleocapsids into virions.

The protein resides in the virion. It localises to the host cytoplasm. Its subcellular location is the host nucleus. The protein localises to the host endoplasmic reticulum-Golgi intermediate compartment. It is found in the host Golgi apparatus. Encapsidates the genomic RNA, protecting it from nucleases. Displays high affinity for single-stranded nucleic acid. The encapsidated genomic RNA is termed the nucleocapsid (NC) or ribonucleoprotein. The ribonucleoprotein has a non-helical structure. Serves as template for viral transcription and replication. After replication, the nucleocapsid is recruited to the host Golgi apparatus by glycoprotein Gn for packaging into virus particles. The polypeptide is Nucleoprotein (NP) (Dabie bandavirus (Severe fever with thrombocytopenia virus)).